The chain runs to 280 residues: MVLDQTKKLLIVIIGALLNAAGLNLFLIPADVYASGFTGVAQLLSSVVDQYAPFYISTGTLLFLLNIPVGILGWLKVGKSFTVYSILSVALTTLFMGILPETSLSHDILLNAVFGGVISAVGIGLTLKYGASTGGLDIVAMVLAKWKDKPVGTYFFILNGIIILTAGLLQGWEKALYTLVTLYVTTRVIDAIHTRHMKLTAMIVTKKADEIKEAIYGKMVRGITTVPAKGAFTNEQKEMMIIVITRYELYDLEKIVKEVDPKAFTNIVQTTGIFGFFRKD.

4 consecutive transmembrane segments (helical) span residues 9-29 (LLIV…FLIP), 54-74 (FYIS…ILGW), 80-100 (SFTV…GILP), and 151-171 (VGTY…LLQG).

It belongs to the UPF0750 family.

Its subcellular location is the cell membrane. The chain is UPF0750 membrane protein YitT (yitT) from Bacillus subtilis (strain 168).